The primary structure comprises 102 residues: PqqA binding protein (102 aa).

Belongs to the PqqD family. Monomer. Interacts with PqqE.

It participates in cofactor biosynthesis; pyrroloquinoline quinone biosynthesis. Functions as a PqqA binding protein and presents PqqA to PqqE, in the pyrroloquinoline quinone (PQQ) biosynthetic pathway. The polypeptide is PqqA binding protein (Rhodopseudomonas palustris (strain HaA2)).